Here is a 483-residue protein sequence, read N- to C-terminus: Serine protease HTRA4 (483 aa).

The N-terminal stretch at 1–30 (MSFQRLWAVRTQFLLLWLLLPAVPVPWAEA) is a signal peptide. Residues 35–113 (VSLPCPDACD…GAWLGTCGCA (79 aa)) enclose the IGFBP N-terminal domain. 6 cysteine pairs are disulfide-bonded: C39/C65, C43/C67, C48/C68, C54/C71, C79/C93, and C87/C110. The interval 208-368 (GSGFIVSEDG…IPSDRIRQFL (161 aa)) is serine protease. Catalysis depends on charge relay system residues H224, D254, and S332. The PDZ domain maps to 379-471 (KAPLQKKYLG…LSIIVLRGSQ (93 aa)).

The protein belongs to the peptidase S1C family.

Its subcellular location is the secreted. In terms of biological role, serine protease. The sequence is that of Serine protease HTRA4 (Htra4) from Mus musculus (Mouse).